Consider the following 2690-residue polypeptide: Non-reducing polyketide synthase pigA (2690 aa).

One can recognise a Starter acyltransferase (SAT) domain in the interval 96 to 211; sequence NILLSPLVVI…AELSRVLQDF (116 aa). Cys-140 acts as the Nucleophile; for transacylase activity in catalysis. His-258 functions as the Proton donor/acceptor; for transacylase activity in the catalytic mechanism. Positions 388 to 804 constitute a Ketosynthase family 3 (KS3) domain; the sequence is ENDIAVIGMS…GSNASLIVTQ (417 aa). Residues Cys-553, His-688, and His-727 each act as for beta-ketoacyl synthase activity in the active site. The Malonyl-CoA:ACP transacylase (MAT) domain occupies 915–1182; the sequence is FGGQISTFVG…VQRLAKQHPS (268 aa). The interval 1296–1426 is N-terminal hotdog fold; that stretch reads LTFVGYQDKD…GKVFFRSVDD (131 aa). The 307-residue stretch at 1296–1602 folds into the PKS/mFAS DH domain; it reads LTFVGYQDKD…YAKVPKMSMS (307 aa). Positions 1323–1600 are product template (PT) domain; that stretch reads LVSGHLIAQT…INYAKVPKMS (278 aa). Residue His-1327 is the Proton acceptor; for dehydratase activity of the active site. Residues 1454 to 1602 are C-terminal hotdog fold; it reads ADDIIQGRNI…YAKVPKMSMS (149 aa). Residue Asp-1510 is the Proton donor; for dehydratase activity of the active site. The 75-residue stretch at 1657–1731 folds into the Carrier 1 domain; the sequence is PDISGKVRAM…GLLRCIQEAL (75 aa). Residue Ser-1691 is modified to O-(pantetheine 4'-phosphoryl)serine. The disordered stretch occupies residues 1731–1764; the sequence is LGPSEGVEEETDNEEGEDGESSENPSVFTPSDAA. Acidic residues predominate over residues 1736–1751; that stretch reads GVEEETDNEEGEDGES. The span at 1755–1764 shows a compositional bias: polar residues; sequence PSVFTPSDAA. The 75-residue stretch at 1768 to 1842 folds into the Carrier 2 domain; that stretch reads SSAKADVAEF…EFDVKVNGKS (75 aa). Position 1802 is an O-(pantetheine 4'-phosphoryl)serine (Ser-1802). The segment at 1948–2255 is methyltransferase domain; the sequence is QTLERIKYLP…EVNIQRIFLA (308 aa). One can recognise a Thioester reductase (TE) domain in the interval 2320 to 2564; the sequence is VTGATGSLGS…LSWTPVNDVA (245 aa).

Pantetheine 4'-phosphate is required as a cofactor.

It participates in secondary metabolite biosynthesis. In terms of biological role, non-reducing polyketide synthase; part of the gene cluster that mediates the biosynthesis of azaphilone pigments (MonAzPs), a complex mixture of compounds with a common azaphilone skeleton very widely used as food colorants. PigA catalyzes the first step of MonAzPs biosynthesis and forms the hexaketide precursor from successive condensations of five malonyl-CoA units, with a simple acetyl-CoA starter unit. The starter acyl transferase (SAT) domain of pigA selects an acetyl-CoA starter unit, and the ketoacyl synthase (KS)-acyl transferase (AT)-acyl carrier protein (ACP) domains extend this starter unit five times with malonyl-CoA in five successive decarboxylative Claisen condensation cycles. The methyltransferase (MT) domain conducts a single C-methylation at C-4, most likely at the pentaketide stage. The reactive hexaketide chain then undergoes a product template (PT) domain-mediated C-2 to C-7 aldol cyclization to afford the first aromatic ring, followed by reductive release of the first pathway intermediate by the NADPH-dependent reductive release (R) domain. The role of esterase pigG is not clear, but it may play at most a supplementary role in the formation of the benzaldehyde produced by the pigA nrPKS. This very reactive benzaldehyde is intercepted by the pigC ketoreductase that to provide the first stable enzyme-free MonAzPs intermediate, 6-(4-hydroxy-2-oxopentyl)-3-methyl-2,4-dioxocyclohexane carbaldehyde, also known as M7PKS-1. The FAD-dependent monooxygenase pigN hydroxylates M7PKS-1 at C-4, which triggers the formation of the pyran ring. PigJ, pigK and pigD are involved in the acetylation of the pyran ring. PigJ and pigK form the two subunits of a dedicated fungal FAS that produces the side chain fatty acyl moiety of MonAzPs and pigD transfers the fatty acyl chain to the C-4 alcohol. PigM and pigO are involved in the elimination of the omega-1 alcohol. PigM acts as an O-acetyltransferase that synthesizes the putative O-11 acetyl intermediate whereas pigO eliminates acetic acid to yield an intermediate with a C10(11) double bond. The dehydration of the C-11 alcohol followed by the reduction of the C6(7) double bond by the NAD(P)H-dependent oxidoreductase pigE increases the electrophilicity of the C-5 ketone of the resulting acyl benzopyran. This in turn sets up the C-5 ketone for an intramolecular Knoevenagel aldol condensation with the C-20 enol of the side chain. This condensation affords the characteristic linear tricyclic carbon skeletons of the yellow pigments that serve as the common precursors for the classical yellow pigments monascin and ankaflavin, orange pigments rubopunctatin and monascorubrin, and red pigments ribropunctamine and monascorubramine. The FAD-dependent oxidoreductase pigF is especially invoved in the biosynthesis of orange and red pigments via desaturation of C6(7). The chain is Non-reducing polyketide synthase pigA from Monascus ruber (Mold).